The following is a 2014-amino-acid chain: AP-1 accessory protein LAA1 (2014 aa).

As to quaternary structure, interacts with the clathrin-associated adapter complex AP-1. Interacts directly with LAA2.

The protein localises to the golgi apparatus. It localises to the cytoplasmic vesicle. It is found in the clathrin-coated vesicle. Involved in localization of clathrin adapter protein complex-1 (AP-1) and subsequent AP-1-mediated clathrin-coated vesicle cargo loading. In complex with LAA2, cooperates with the small GTPase ARF1 and the phosphatidyl-inositol-4-phosphate (PI4P) synthesis to confer temporal specificity to AP-1 recruitment. This chain is AP-1 accessory protein LAA1, found in Saccharomyces cerevisiae (strain ATCC 204508 / S288c) (Baker's yeast).